Here is an 824-residue protein sequence, read N- to C-terminus: Acyl-homoserine lactone acylase QuiP (824 aa).

The signal sequence occupies residues Met1–Ala26. Catalysis depends on Ser264, which acts as the Nucleophile.

It belongs to the peptidase S45 family. Heterodimer of an alpha subunit and a beta subunit processed from the same precursor.

The protein resides in the periplasm. The catalysed reaction is an N-acyl-L-homoserine lactone + H2O = L-homoserine lactone + a carboxylate. In terms of biological role, catalyzes the deacylation of acyl-homoserine lactone (AHL or acyl-HSL), releasing homoserine lactone (HSL) and the corresponding fatty acid. Possesses a specificity for the degradation of long-chain acyl-HSLs (side chains of seven or more carbons in length). The chain is Acyl-homoserine lactone acylase QuiP (quiP) from Pseudomonas syringae pv. tomato (strain ATCC BAA-871 / DC3000).